The primary structure comprises 742 residues: Photosystem I P700 chlorophyll a apoprotein A2 (742 aa).

8 helical membrane-spanning segments follow: residues 46–69 (LFST…FHIA), 135–158 (LFQA…LHLQ), 175–199 (LNHH…HVAI), 273–291 (IAHH…GHMY), 336–359 (LHFQ…QHMG), 375–401 (SALY…IFFV), 423–445 (ALIS…IYVH), and 525–543 (FLVH…LILI). Cys567 and Cys576 together coordinate [4Fe-4S] cluster. A run of 2 helical transmembrane segments spans residues 583 to 604 (AMYL…YWHW) and 651 to 673 (LSVW…MFLI). Divinyl chlorophyll a is bound by residues His662, Met670, and Tyr678. Trp679 is a binding site for phylloquinone. The chain crosses the membrane as a helical span at residues 715 to 735 (LVGLAHFTIGNILTFGAFVIA).

It belongs to the PsaA/PsaB family. As to quaternary structure, the PsaA/B heterodimer binds the P700 divinyl chlorophyll special pair and subsequent electron acceptors. PSI consists of a core antenna complex that captures photons, and an electron transfer chain that converts photonic excitation into a charge separation. The cyanobacterial PSI reaction center is composed of one copy each of PsaA,B,C,D,E,F,I,J,K,L,M and X, and forms trimeric complexes. Requires PSI electron transfer chain: 5 divinyl chlorophyll a, 1 divinyl chlorophyll a', 2 phylloquinones and 3 4Fe-4S clusters. PSI core antenna: 90 divinyl chlorophyll a, 22 carotenoids, 3 phospholipids and 1 galactolipid. P700 is a divinyl chlorophyll a/divinyl chlorophyll a' dimer, A0 is one or more divinyl chlorophyll a, A1 is one or both phylloquinones and FX is a shared 4Fe-4S iron-sulfur center. as cofactor.

The protein resides in the cellular thylakoid membrane. The enzyme catalyses reduced [plastocyanin] + hnu + oxidized [2Fe-2S]-[ferredoxin] = oxidized [plastocyanin] + reduced [2Fe-2S]-[ferredoxin]. Its function is as follows. PsaA and PsaB bind P700, the primary electron donor of photosystem I (PSI), as well as the electron acceptors A0, A1 and FX. PSI is a plastocyanin/cytochrome c6-ferredoxin oxidoreductase, converting photonic excitation into a charge separation, which transfers an electron from the donor P700 chlorophyll pair to the spectroscopically characterized acceptors A0, A1, FX, FA and FB in turn. Oxidized P700 is reduced on the lumenal side of the thylakoid membrane by plastocyanin or cytochrome c6. The chain is Photosystem I P700 chlorophyll a apoprotein A2 from Prochlorococcus marinus (strain MIT 9515).